A 111-amino-acid chain; its full sequence is Photosystem II reaction center Psb28 protein (111 aa).

This sequence belongs to the Psb28 family. In terms of assembly, part of the photosystem II complex.

Its subcellular location is the cellular thylakoid membrane. This Gloeothece citriformis (strain PCC 7424) (Cyanothece sp. (strain PCC 7424)) protein is Photosystem II reaction center Psb28 protein.